Consider the following 277-residue polypeptide: Anamorsin homolog (277 aa).

An N-terminal SAM-like domain region spans residues 1–134; that stretch reads MALQGNVAIL…PFYPEFSDAV (134 aa). The segment at 135 to 191 is linker; that stretch reads SFTSKKQSFESAAIPLAVKSTTTQPIKKWTVLADDFGDDQDDDIIDEDTLLDDTDEV. The [2Fe-2S] cluster site is built by Cys-199, Cys-210, Cys-213, and Cys-215. A fe-S binding site A region spans residues 199–215; it reads CGDAVGGKKRACKNCTC. The [4Fe-4S] cluster site is built by Cys-238, Cys-241, Cys-249, and Cys-252. 2 short sequence motifs (cx2C motif) span residues 238–241 and 249–252; these read CGNC and CGSC. The fe-S binding site B stretch occupies residues 238–252; sequence CGNCFKGDAFRCGSC.

Belongs to the anamorsin family. Monomer. It depends on [2Fe-2S] cluster as a cofactor. [4Fe-4S] cluster serves as cofactor.

It localises to the cytoplasm. It is found in the mitochondrion intermembrane space. Component of the cytosolic iron-sulfur (Fe-S) protein assembly (CIA) machinery. Required for the maturation of extramitochondrial Fe-S proteins. Part of an electron transfer chain functioning in an early step of cytosolic Fe-S biogenesis, facilitating the de novo assembly of a [4Fe-4S] cluster on the cytosolic Fe-S scaffold complex. Electrons are transferred from NADPH via a FAD- and FMN-containing diflavin oxidoreductase. Together with the diflavin oxidoreductase, also required for the assembly of the diferric tyrosyl radical cofactor of ribonucleotide reductase (RNR), probably by providing electrons for reduction during radical cofactor maturation in the catalytic small subunit. In Phytophthora infestans (strain T30-4) (Potato late blight agent), this protein is Anamorsin homolog.